The chain runs to 469 residues: UDP-N-acetylmuramoylalanine--D-glutamate ligase (469 aa).

121-127 (GTNGKST) contacts ATP.

Belongs to the MurCDEF family.

It is found in the cytoplasm. It catalyses the reaction UDP-N-acetyl-alpha-D-muramoyl-L-alanine + D-glutamate + ATP = UDP-N-acetyl-alpha-D-muramoyl-L-alanyl-D-glutamate + ADP + phosphate + H(+). It functions in the pathway cell wall biogenesis; peptidoglycan biosynthesis. Its function is as follows. Cell wall formation. Catalyzes the addition of glutamate to the nucleotide precursor UDP-N-acetylmuramoyl-L-alanine (UMA). This is UDP-N-acetylmuramoylalanine--D-glutamate ligase from Agrobacterium fabrum (strain C58 / ATCC 33970) (Agrobacterium tumefaciens (strain C58)).